A 256-amino-acid chain; its full sequence is Thiazole synthase (256 aa).

The Schiff-base intermediate with DXP role is filled by Lys-95. 1-deoxy-D-xylulose 5-phosphate-binding positions include Gly-156, 182 to 183 (AG), and 204 to 205 (NT).

Belongs to the ThiG family. Homotetramer. Forms heterodimers with either ThiH or ThiS.

The protein localises to the cytoplasm. The catalysed reaction is [ThiS sulfur-carrier protein]-C-terminal-Gly-aminoethanethioate + 2-iminoacetate + 1-deoxy-D-xylulose 5-phosphate = [ThiS sulfur-carrier protein]-C-terminal Gly-Gly + 2-[(2R,5Z)-2-carboxy-4-methylthiazol-5(2H)-ylidene]ethyl phosphate + 2 H2O + H(+). It participates in cofactor biosynthesis; thiamine diphosphate biosynthesis. In terms of biological role, catalyzes the rearrangement of 1-deoxy-D-xylulose 5-phosphate (DXP) to produce the thiazole phosphate moiety of thiamine. Sulfur is provided by the thiocarboxylate moiety of the carrier protein ThiS. In vitro, sulfur can be provided by H(2)S. This Escherichia coli (strain 55989 / EAEC) protein is Thiazole synthase.